A 1331-amino-acid polypeptide reads, in one-letter code: Xanthine dehydrogenase/oxidase (1331 aa).

In terms of domain architecture, 2Fe-2S ferredoxin-type spans 4-91 (DELVFFVNGK…HVAVTTVEGI (88 aa)). [2Fe-2S] cluster is bound by residues Cys-43, Cys-48, Cys-51, Cys-73, Cys-112, Cys-115, Cys-147, and Cys-149. The 186-residue stretch at 228–413 (FEGERVTWIQ…LSIEIPYSKE (186 aa)) folds into the FAD-binding PCMH-type domain. FAD is bound by residues 256–263 (LVVGNTEI), Phe-336, 346–350 (SIGGN), Asp-359, Leu-403, and Lys-421. A disulfide bond links Cys-535 and Cys-992. The Mo-molybdopterin site is built by Gln-767 and Phe-798. The substrate site is built by Glu-802 and Arg-880. Arg-912 lines the Mo-molybdopterin pocket. Positions 914 and 1010 each coordinate substrate. Ala-1079 provides a ligand contact to Mo-molybdopterin. Glu-1261 (proton acceptor) is an active-site residue.

The protein belongs to the xanthine dehydrogenase family. Homodimer. Interacts with BTN1A1. [2Fe-2S] cluster serves as cofactor. It depends on FAD as a cofactor. Requires Mo-molybdopterin as cofactor. Post-translationally, subject to partial proteolysis; this alters the enzyme from the dehydrogenase form (D) to the oxidase form (O). Contains sulfhydryl groups that are easily oxidized (in vitro); this alters the enzyme from the dehydrogenase form (D) to the oxidase form (O).

Its subcellular location is the peroxisome. It is found in the cytoplasm. It localises to the secreted. It carries out the reaction xanthine + NAD(+) + H2O = urate + NADH + H(+). The enzyme catalyses hypoxanthine + NAD(+) + H2O = xanthine + NADH + H(+). It catalyses the reaction xanthine + O2 + H2O = urate + H2O2. Can be converted from the dehydrogenase form (D) to the oxidase form (O) irreversibly by proteolysis or reversibly through the oxidation of sulfhydryl groups. Key enzyme in purine degradation. Catalyzes the oxidation of hypoxanthine to xanthine. Catalyzes the oxidation of xanthine to uric acid. Contributes to the generation of reactive oxygen species. The protein is Xanthine dehydrogenase/oxidase (Xdh) of Rattus norvegicus (Rat).